The primary structure comprises 840 residues: Subtilisin-like protease SBT2.3 (840 aa).

A signal peptide spans 1–27 (MVRVMLVRFGFLLLMISFVFLSNNTLG). Residues 28–146 (QQQDDDDDSA…IVLDYSVRTA (119 aa)) constitute a propeptide, activation peptide. Positions 38-146 (VYIVTLKQPP…IVLDYSVRTA (109 aa)) constitute an Inhibitor I9 domain. Basic residues predominate over residues 61–81 (KSKFTPKLRPRNNSRKRHGKS). The interval 61–85 (KSKFTPKLRPRNNSRKRHGKSKIPS) is disordered. Asn-72 is a glycosylation site (N-linked (GlcNAc...) asparagine). The Peptidase S8 domain maps to 148–694 (TYTPQFMGLP…SGFVNATAAL (547 aa)). Asp-180 functions as the Charge relay system in the catalytic mechanism. 2 N-linked (GlcNAc...) asparagine glycosylation sites follow: Asn-193 and Asn-241. Residue His-255 is the Charge relay system of the active site. 5 N-linked (GlcNAc...) asparagine glycosylation sites follow: Asn-398, Asn-427, Asn-480, Asn-525, and Asn-553. The PA domain occupies 418-513 (MISAFHALNN…MDMPGIIIPS (96 aa)). The active-site Charge relay system is the Ser-619. 5 N-linked (GlcNAc...) asparagine glycosylation sites follow: Asn-689, Asn-715, Asn-723, Asn-767, and Asn-808.

This sequence belongs to the peptidase S8 family.

It localises to the secreted. The polypeptide is Subtilisin-like protease SBT2.3 (Arabidopsis thaliana (Mouse-ear cress)).